The primary structure comprises 527 residues: Transcription factor bHLH157 (527 aa).

2 disordered regions span residues 295 to 318 (SGVN…LFPQ) and 335 to 368 (SSIG…KDRQ). The span at 307–318 (TSSAHSSSLFPQ) shows a compositional bias: polar residues. The short motif at 341–348 (WKKPHEEG) is the Nuclear localization signal element. Positions 343-368 (KPHEEGVKKKRAKAGESRRPRPKDRQ) are enriched in basic and acidic residues. The bHLH domain maps to 354 to 403 (AKAGESRRPRPKDRQMIQDRIKELRGMIPNGAKCSIDTLLDLTIKHMVFM).

It belongs to the bHLH protein family. LHW subfamily. In terms of assembly, homodimer.

The protein resides in the nucleus. In terms of biological role, transcription factor that may regulate root development. The protein is Transcription factor bHLH157 (BHLH157) of Arabidopsis thaliana (Mouse-ear cress).